Consider the following 227-residue polypeptide: Monoamine regulon transcriptional regulator (227 aa).

An HTH luxR-type domain is found at 155–220 (EDDLPAILTA…ELVSRTWMPA (66 aa)). Residues 179 to 198 (NKLIARQLDISLSTVKTHLR) constitute a DNA-binding region (H-T-H motif).

Its function is as follows. Positive regulatory protein for the induction of arylsulfatase synthesis (maoA), tyramine oxidase (tynA), maoC, maoE/F operon, and atsB/A operon which are all regulated by monoamines, and included under the common term of monoamine regulon. The polypeptide is Monoamine regulon transcriptional regulator (moaR) (Klebsiella aerogenes (Enterobacter aerogenes)).